Reading from the N-terminus, the 408-residue chain is MPVLLIVVDGLSDRPIDGKTPLSVARKPNLDRLAEMGINGIMDTIAPGIRPGSDTSHLALLGYDPYKYYSGRGPIEAAGVGIEIKPGDVAFRANFATVEGEGSIFDKTVVDRRAGRIEDTSELIKALREIELPVELLVERGTGHRAAVVFRGEGLSDRVSDTDPKAVGKKVKRCVPLADDAKAKKTAEIVNEFMQKAHEVLENHPLNRERAEKGLLKANALLLRGAGEMPHVPSFKDKTGLRLCVIAATALIKGVGRVVGADVITPEGATGNKNTNLEAKVKAAINALESYDVVLLHIKATDELGHDGDFEGKKAFIEKLDEKIAPLLDLDFSKTCLILTADHSTPIKVKDHTADPVPVVIVHEDVRRDEVSSFSEFEAYKGGLCRIRGMDLLNIALDLLNIAKKFGA.

Belongs to the BPG-independent phosphoglycerate mutase family. A-PGAM subfamily. In terms of assembly, monomer. Mn(2+) is required as a cofactor.

The catalysed reaction is (2R)-2-phosphoglycerate = (2R)-3-phosphoglycerate. Its pathway is carbohydrate degradation; glycolysis; pyruvate from D-glyceraldehyde 3-phosphate: step 3/5. Functionally, catalyzes the interconversion of 2-phosphoglycerate and 3-phosphoglycerate. The sequence is that of 2,3-bisphosphoglycerate-independent phosphoglycerate mutase 1 (apgM1) from Archaeoglobus fulgidus (strain ATCC 49558 / DSM 4304 / JCM 9628 / NBRC 100126 / VC-16).